The following is a 120-amino-acid chain: Large ribosomal subunit protein bL21 (120 aa).

Belongs to the bacterial ribosomal protein bL21 family. Part of the 50S ribosomal subunit. Contacts protein L20.

Functionally, this protein binds to 23S rRNA in the presence of protein L20. This is Large ribosomal subunit protein bL21 from Rhizorhabdus wittichii (strain DSM 6014 / CCUG 31198 / JCM 15750 / NBRC 105917 / EY 4224 / RW1) (Sphingomonas wittichii).